The primary structure comprises 130 residues: MKELKEHPFILMIIVLGLFLVSIGGYYYRENFATDSITQGVTETVRASVISNADNSSRVQSGELFIVKSDFEKDFKKRIESNKLVKISSGATYEFKYLDNKNGSTKAIRAIIHDGDQTYQATYKVSIASS.

The chain crosses the membrane as a helical span at residues P8–Y28.

The protein localises to the membrane. This is an uncharacterized protein from Bacillus anthracis.